Consider the following 561-residue polypeptide: Nucleoprotein (561 aa).

Positions 53–237 are binding site for the cap structure m7GTP; it reads MRKDKRSEAD…ITQEPAQINI (185 aa). Mn(2+)-binding residues include Asp380 and Glu382. Residues Glu390, Cys497, His500, and Cys521 each contribute to the Zn(2+) site. Asp525 is a binding site for Mn(2+).

Belongs to the arenaviridae nucleocapsid protein family. Homomultimerizes to form the nucleocapsid. Binds to viral genomic RNA. Interacts with glycoprotein G2. Interacts with protein Z; this interaction probably directs the encapsidated genome to budding sites. Interacts with protein L; this interaction does not interfere with Z-L interaction. Interacts with host IKBKE (via Protein kinase domain); the interaction inhibits IKBKE kinase activity.

The protein localises to the virion. The protein resides in the host cytoplasm. In terms of biological role, encapsidates the genome, protecting it from nucleases. The encapsidated genomic RNA is termed the nucleocapsid (NC). Serves as template for viral transcription and replication. The increased presence of protein N in host cell does not seem to trigger the switch from transcription to replication as observed in other negative strain RNA viruses. Through the interaction with host IKBKE, strongly inhibits the phosphorylation and nuclear translocation of host IRF3, a protein involved in interferon activation pathway, leading to the inhibition of interferon-beta and IRF3-dependent promoters activation. Also encodes a functional 3'-5' exoribonuclease that degrades preferentially dsRNA substrates and thereby participates in the suppression of interferon induction. This chain is Nucleoprotein, found in Allpahuayo mammarenavirus (isolate Rat/Peru/CLHP-2472/1997) (ALLV).